The sequence spans 1315 residues: DNA-directed RNA polymerase subunit beta' (1315 aa).

Zn(2+)-binding residues include C60, C62, C75, and C78. Mg(2+)-binding residues include D535, D537, and D539. 4 residues coordinate Zn(2+): C890, C967, C974, and C977.

It belongs to the RNA polymerase beta' chain family. In terms of assembly, the RNAP catalytic core consists of 2 alpha, 1 beta, 1 beta' and 1 omega subunit. When a sigma factor is associated with the core the holoenzyme is formed, which can initiate transcription. It depends on Mg(2+) as a cofactor. The cofactor is Zn(2+).

It carries out the reaction RNA(n) + a ribonucleoside 5'-triphosphate = RNA(n+1) + diphosphate. Its function is as follows. DNA-dependent RNA polymerase catalyzes the transcription of DNA into RNA using the four ribonucleoside triphosphates as substrates. This Mycobacterium sp. (strain MCS) protein is DNA-directed RNA polymerase subunit beta'.